A 466-amino-acid polypeptide reads, in one-letter code: MSVVPVVDVLQGRVAVDSEVTVRGWVRTRRDSKAGISFIAVYDGSCFNPLQAVVNNNLSNYQDDVLRLTTGCSVEITGNVVASPGEGQSFELQATNVNVVGWVDDPDTYPMAAKRHSIEYLREVAHLRPRTNLIGAVARVRHTLAQAIHRFFHENGYFWVSTPLITASDTEGAGEMFRVSTLDMENLPRTEQGKVDFSKDFFGKEAFLTVSGQLNGETYACALSNVYTFGPTFRAENSNTARHLAEFWMIEPEVAFASLDDVAALAENLLKYVFQAVLNERADDMAFFAERVDKEAVTRLEKFVSSDFAQVDYTDAVEILLNCGQQFENPVYWGVDLSSEHERYLAEQHFKAPVVVKNYPKDIKAFYMRMNDDGKTVAAMDVLAPGIGEIIGGSQREERLAALDSRLEEMGLNKEDYWWYRDLRRYGTIPHSGFGLGFERLIAYVTGVQNVRDVIPFPRTPRNASF.

The protein belongs to the class-II aminoacyl-tRNA synthetase family. In terms of assembly, homodimer.

Its subcellular location is the cytoplasm. It catalyses the reaction tRNA(Asn) + L-asparagine + ATP = L-asparaginyl-tRNA(Asn) + AMP + diphosphate + H(+). This is Asparagine--tRNA ligase from Pectobacterium atrosepticum (strain SCRI 1043 / ATCC BAA-672) (Erwinia carotovora subsp. atroseptica).